A 644-amino-acid chain; its full sequence is Adhesion G-protein coupled receptor F2 (644 aa).

Positions 1-18 (MIPAHWLYCLMLLLPIES) are cleaved as a signal peptide. Residues 19-386 (CRILCQASSK…ESPVLTYITY (368 aa)) lie on the Extracellular side of the membrane. Asn-155, Asn-219, Asn-293, and Asn-311 each carry an N-linked (GlcNAc...) asparagine glycan. A GAIN-B domain is found at 233-377 (SRGSLGKNFT…SILMSPNTLE (145 aa)). Cystine bridges form between Cys-329/Cys-356 and Cys-344/Cys-358. Residues 329–377 (CVGWHSLESRWDWRACKTIQENSRQAVCRCRPNKLYTSFSILMSPNTLE) are GPS. A helical transmembrane segment spans residues 387-407 (IGLGISICSLIICLAIEVLVW). At 408–422 (SQVTKTEISYLRHLC) the chain is on the cytoplasmic side. A helical membrane pass occupies residues 423-443 (IANIAATLLMADAWFIVASFL). The Extracellular portion of the chain corresponds to 444 to 465 (SGPVLHHNGCVAATFFVHFFYL). The chain crosses the membrane as a helical span at residues 466-486 (SVFFWMLAKALLILYGILIVF). Residues 487-493 (HTLPKSC) lie on the Cytoplasmic side of the membrane. The helical transmembrane segment at 494 to 514 (LVASLFSVGYGCPLVIAIITL) threads the bilayer. Over 515 to 541 (AVTEPGKGYLRPEACWLNWDMTKALLA) the chain is Extracellular. A helical transmembrane segment spans residues 542-562 (FVVPALAIVVVNLITVTMVII). The Cytoplasmic portion of the chain corresponds to 563-585 (KTQRAAIGSSMFQEVRAIVRICK). Residues 586–606 (NIAILTPLLGLTWGFGIATVI) form a helical membrane-spanning segment. Residues 607 to 610 (NGHS) lie on the Extracellular side of the membrane. The chain crosses the membrane as a helical span at residues 611 to 631 (LAFHIIFSLLNALQVSPDAAV).

This sequence belongs to the G-protein coupled receptor 2 family. Adhesion G-protein coupled receptor (ADGR) subfamily. As to expression, mainly expressed in skin and heart, and very weakly in lung and spleen. Detected in all epidermal layers of skin.

Its subcellular location is the membrane. Functionally, orphan receptor. This chain is Adhesion G-protein coupled receptor F2 (Adgrf2), found in Mus musculus (Mouse).